The following is a 231-amino-acid chain: dTTP/UTP pyrophosphatase (231 aa).

Asp-85 functions as the Proton acceptor in the catalytic mechanism.

The protein belongs to the Maf family. YhdE subfamily. The cofactor is a divalent metal cation.

The protein resides in the cytoplasm. It catalyses the reaction dTTP + H2O = dTMP + diphosphate + H(+). The catalysed reaction is UTP + H2O = UMP + diphosphate + H(+). Its function is as follows. Nucleoside triphosphate pyrophosphatase that hydrolyzes dTTP and UTP. May have a dual role in cell division arrest and in preventing the incorporation of modified nucleotides into cellular nucleic acids. The chain is dTTP/UTP pyrophosphatase from Psychrobacter arcticus (strain DSM 17307 / VKM B-2377 / 273-4).